The following is a 905-amino-acid chain: Protein translocase subunit SecA (905 aa).

Residues Q86, 104 to 108 (GEGKT), and D499 contribute to the ATP site. Zn(2+)-binding residues include C890, C892, C901, and H902.

It belongs to the SecA family. Monomer and homodimer. Part of the essential Sec protein translocation apparatus which comprises SecA, SecYEG and auxiliary proteins SecDF-YajC and YidC. Zn(2+) serves as cofactor.

The protein resides in the cell inner membrane. It is found in the cytoplasm. The enzyme catalyses ATP + H2O + cellular proteinSide 1 = ADP + phosphate + cellular proteinSide 2.. Part of the Sec protein translocase complex. Interacts with the SecYEG preprotein conducting channel. Has a central role in coupling the hydrolysis of ATP to the transfer of proteins into and across the cell membrane, serving both as a receptor for the preprotein-SecB complex and as an ATP-driven molecular motor driving the stepwise translocation of polypeptide chains across the membrane. In Rickettsia typhi (strain ATCC VR-144 / Wilmington), this protein is Protein translocase subunit SecA.